Consider the following 434-residue polypeptide: Histidinol dehydrogenase (434 aa).

3 residues coordinate NAD(+): Y129, Q191, and N214. Substrate contacts are provided by S240, Q262, and H265. Q262 and H265 together coordinate Zn(2+). Residues E329 and H330 each act as proton acceptor in the active site. H330, D363, E417, and H422 together coordinate substrate. D363 is a binding site for Zn(2+). Residue H422 coordinates Zn(2+).

The protein belongs to the histidinol dehydrogenase family. Zn(2+) is required as a cofactor.

The enzyme catalyses L-histidinol + 2 NAD(+) + H2O = L-histidine + 2 NADH + 3 H(+). It functions in the pathway amino-acid biosynthesis; L-histidine biosynthesis; L-histidine from 5-phospho-alpha-D-ribose 1-diphosphate: step 9/9. In terms of biological role, catalyzes the sequential NAD-dependent oxidations of L-histidinol to L-histidinaldehyde and then to L-histidine. The sequence is that of Histidinol dehydrogenase from Colwellia psychrerythraea (strain 34H / ATCC BAA-681) (Vibrio psychroerythus).